The chain runs to 274 residues: Caldesmon, smooth muscle (274 aa).

2 disordered regions span residues 1–102 (SNLK…FSPK) and 179–274 (KGNV…EKEP). Basic and acidic residues-rich tracts occupy residues 12 to 21 (GSEKLKEKQQ) and 28 to 95 (DELK…EKKP). The span at 182–194 (VFSSPGGTGTPNK) shows a compositional bias: polar residues. 2 stretches are compositionally biased toward basic and acidic residues: residues 226 to 245 (SDLR…KQSV) and 260 to 274 (KKSE…EKEP).

The protein localises to the cytoplasm. Its subcellular location is the cytoskeleton. The protein resides in the myofibril. It localises to the stress fiber. Functionally, control of actomyosin interactions in smooth muscle and nonmuscle cells (could act as a bridge between myosin and actin filaments). Inhibits the actin-activated ATPase of myosin this inhibition is attenuated by calcium-calmodulin and is potentiated by tropomyosin. Interacts with actin, myosin, 2 molecules of tropomyosin and with calmodulin. The chain is Caldesmon, smooth muscle (CALD1) from Meleagris gallopavo (Wild turkey).